The following is a 175-amino-acid chain: uncharacterized protein (175 aa).

It belongs to the asfivirus B175L family.

This is an uncharacterized protein from Ornithodoros (relapsing fever ticks).